The chain runs to 217 residues: UPF0502 protein ESA_02280 (217 aa).

The protein belongs to the UPF0502 family.

In Cronobacter sakazakii (strain ATCC BAA-894) (Enterobacter sakazakii), this protein is UPF0502 protein ESA_02280.